The sequence spans 29 residues: Cytochrome b6-f complex subunit 8 (29 aa).

A helical membrane pass occupies residues 3–23 (ILSISWAFLMVVFTFSLSLVV).

Belongs to the PetN family. As to quaternary structure, the 4 large subunits of the cytochrome b6-f complex are cytochrome b6, subunit IV (17 kDa polypeptide, PetD), cytochrome f and the Rieske protein, while the 4 small subunits are PetG, PetL, PetM and PetN. The complex functions as a dimer.

Its subcellular location is the plastid. It localises to the chloroplast thylakoid membrane. Its function is as follows. Component of the cytochrome b6-f complex, which mediates electron transfer between photosystem II (PSII) and photosystem I (PSI), cyclic electron flow around PSI, and state transitions. The chain is Cytochrome b6-f complex subunit 8 from Chara vulgaris (Common stonewort).